The chain runs to 477 residues: Stromelysin-1 (477 aa).

The signal sequence occupies residues methionine 1 to serine 17. A propeptide spans tyrosine 18 to glycine 99 (activation peptide). A Cysteine switch motif is present at residues proline 90 to valine 97. Position 92 (cysteine 92) interacts with Zn(2+). Residues aspartate 124 and aspartate 158 each contribute to the Ca(2+) site. The Zn(2+) site is built by histidine 168 and aspartate 170. The Ca(2+) site is built by aspartate 175, glycine 176, glycine 178, and valine 180. Residue histidine 183 coordinates Zn(2+). Positions 190, 192, and 194 each coordinate Ca(2+). Histidine 196 contributes to the Zn(2+) binding site. Residues aspartate 198, aspartate 199, and glutamate 201 each contribute to the Ca(2+) site. Residue histidine 218 coordinates Zn(2+). The active site involves glutamate 219. Residues histidine 222 and histidine 228 each coordinate Zn(2+). Hemopexin repeat units lie at residues serine 287–leucine 336, proline 337–alanine 383, valine 385–valine 433, and aspartate 434–cysteine 477. An intrachain disulfide couples cysteine 290 to cysteine 477. Aspartate 297 serves as a coordination point for Ca(2+). Residues aspartate 389 and aspartate 438 each contribute to the Ca(2+) site.

Belongs to the peptidase M10A family. Ca(2+) serves as cofactor. The cofactor is Zn(2+).

The protein resides in the secreted. It localises to the extracellular space. Its subcellular location is the extracellular matrix. It carries out the reaction Preferential cleavage where P1', P2' and P3' are hydrophobic residues.. In terms of biological role, metalloproteinase with a rather broad substrate specificity that can degrade fibronectin, laminin, gelatins of type I, III, IV, and V; collagens III, IV, X, and IX, and cartilage proteoglycans. Activates different molecules including growth factors, plasminogen or other matrix metalloproteinases such as MMP9. Once released into the extracellular matrix (ECM), the inactive pro-enzyme is activated by the plasmin cascade signaling pathway. Also acts intracellularly. For example, in dopaminergic neurons, gets activated by the serine protease HTRA2 upon stress and plays a pivotal role in DA neuronal degeneration by mediating microglial activation and alpha-synuclein/SNCA cleavage. In addition, plays a role in immune response and possesses antiviral activity against various viruses. Mechanistically, translocates from the cytoplasm into the cell nucleus upon virus infection to influence NF-kappa-B activities. The sequence is that of Stromelysin-1 (Mmp3) from Mus musculus (Mouse).